The following is a 232-amino-acid chain: Putative membrane protein ORF8 (232 aa).

Over residues 71-84 the composition is skewed to low complexity; sequence GSSAASIPSAPTPD. The segment at 71-121 is disordered; that stretch reads GSSAASIPSAPTPDATRESPTGEPHRDRALSTETPTPEPSRDGGSTPEVLH. 2 helical membrane passes run 166–182 and 195–211; these read VFAR…GSVA and LVVT…WVIV.

The protein resides in the membrane. The sequence is that of Putative membrane protein ORF8 (ORF8) from Ictalurid herpesvirus 1 (strain Auburn) (IcHV-1).